The sequence spans 523 residues: DNA primase (523 aa).

The segment at 37 to 61 (CPFHAEKTPSFFVNPLQGYFYCFGC) adopts a CHC2-type zinc-finger fold. Positions 259–340 (KSVILVEGYI…NVSVVRMDFG (82 aa)) constitute a Toprim domain. Residues glutamate 265, aspartate 309, and aspartate 311 each coordinate Mg(2+).

Belongs to the DnaG primase family. In terms of assembly, monomer. Interacts with DnaB. Requires Zn(2+) as cofactor. It depends on Mg(2+) as a cofactor.

The catalysed reaction is ssDNA + n NTP = ssDNA/pppN(pN)n-1 hybrid + (n-1) diphosphate.. RNA polymerase that catalyzes the synthesis of short RNA molecules used as primers for DNA polymerase during DNA replication. This Borreliella burgdorferi (strain ATCC 35210 / DSM 4680 / CIP 102532 / B31) (Borrelia burgdorferi) protein is DNA primase.